Here is a 311-residue protein sequence, read N- to C-terminus: Ribosomal protein L11 methyltransferase (311 aa).

S-adenosyl-L-methionine is bound by residues threonine 162, glycine 183, aspartate 205, and asparagine 248.

Belongs to the methyltransferase superfamily. PrmA family.

Its subcellular location is the cytoplasm. The enzyme catalyses L-lysyl-[protein] + 3 S-adenosyl-L-methionine = N(6),N(6),N(6)-trimethyl-L-lysyl-[protein] + 3 S-adenosyl-L-homocysteine + 3 H(+). Methylates ribosomal protein L11. This Bacillus pumilus (strain SAFR-032) protein is Ribosomal protein L11 methyltransferase.